Consider the following 444-residue polypeptide: MKHFEANFDGLVGPTHNYAGLSFGNVASLNNAALVSNPKAAAKQGLQKAKALADLGMIQGMLAPQERPDLNTLRRIGFSGSDAQVLQQAAKTAPALLNACCSASSMWTANAATVSPSADTRDGKLHFTPANLVDKLHRSIEPTTTGRILTATFNDPHYFHHHNHLPEHNSFGDEGAANHTRLCQEYGHAGVELFVYGQEATNPNAPRPQKYPARQTLEASMAIARLHQLEEDNCVFIQQNPDVIDQGVFHNDVIAVGNQNVLFYHEQAFLNTQAKLDEIRRKLDTELFFIEVPTTKVAINNAVKSYLFNTQIITLPSGEMAIIAPTDCQENPAVYAYLNELLTLNTPIKQVLYFDVKQSMQNGGGPACLRLRVAMNEREVAAANQHTLLNDALFARLNTWVDKHYRDRLSTQDLADPQLVVESRTALDELTQIMKLGSVYPFQR.

Residues 19 to 28, N110, and 137 to 138 contribute to the substrate site; these read AGLSFGNVAS and HR. The active site involves E174. R214 contributes to the substrate binding site. H250 is a catalytic residue. Substrate contacts are provided by D252 and N362. Residue C368 is the Nucleophile of the active site.

It belongs to the succinylarginine dihydrolase family. As to quaternary structure, homodimer.

It carries out the reaction N(2)-succinyl-L-arginine + 2 H2O + 2 H(+) = N(2)-succinyl-L-ornithine + 2 NH4(+) + CO2. Its pathway is amino-acid degradation; L-arginine degradation via AST pathway; L-glutamate and succinate from L-arginine: step 2/5. Its function is as follows. Catalyzes the hydrolysis of N(2)-succinylarginine into N(2)-succinylornithine, ammonia and CO(2). This chain is N-succinylarginine dihydrolase, found in Shewanella sp. (strain ANA-3).